Reading from the N-terminus, the 431-residue chain is MFMSQIVDIRAREILDSRGNPTIEADVILASGVVGRACAPSGASTGSREALELRDGDKARYLGKGVKTAVNNVNTIIRDALVGKSVFEQKDIDNTMIELDGTENKEKLGANATLAVSLAAARAAADEKKIPLFQYIADLRGQTILTMPVPMMNIINGGSHADNNVDIQEFMIEPVGFTSFSEALRAGAEIFHSLKSVLNKKGLNTAVGDEGGFAPNLRSNEEAITVILEAIGQTGYKAGSDIMLALDCASSEFYKNGQYILAGEGNKAFTSNQFSDYLAGLVNQYPIISIEDGLDESDWEGWSYLTSILGDKIQLVGDDLFVTNPKILQRGINEKVGNSILIKYNQIGTLTETLDAIYLAKDNGYSTVISHRSGETEDSTIADLAVGTAAGQIKTGSLCRSDRVAKYNQLLRIEELTKAAYRGKAEFKGLN.

Glutamine 168 serves as a coordination point for (2R)-2-phosphoglycerate. The active-site Proton donor is glutamate 210. Aspartate 247, glutamate 291, and aspartate 318 together coordinate Mg(2+). The (2R)-2-phosphoglycerate site is built by lysine 343, arginine 372, serine 373, and lysine 394. Catalysis depends on lysine 343, which acts as the Proton acceptor.

Belongs to the enolase family. In terms of assembly, component of the RNA degradosome, a multiprotein complex involved in RNA processing and mRNA degradation. Requires Mg(2+) as cofactor.

Its subcellular location is the cytoplasm. It localises to the secreted. The protein localises to the cell surface. The enzyme catalyses (2R)-2-phosphoglycerate = phosphoenolpyruvate + H2O. The protein operates within carbohydrate degradation; glycolysis; pyruvate from D-glyceraldehyde 3-phosphate: step 4/5. Its function is as follows. Catalyzes the reversible conversion of 2-phosphoglycerate (2-PG) into phosphoenolpyruvate (PEP). It is essential for the degradation of carbohydrates via glycolysis. The protein is Enolase of Acinetobacter baylyi (strain ATCC 33305 / BD413 / ADP1).